We begin with the raw amino-acid sequence, 1132 residues long: MQMVPSLPPASECAGEEKRVGTRTVFVGNHPVSETEAYIAQRFCDNRIVSSKYTLWNFLPKNLFEQFRRIANFYFLIIFLVQVTVDTPTSPVTSGLPLFFVITVTAIKQGYEDCLRHRADNEVNKSTVYIIENAKRVRKESEKIKVGDVVEVQADETFPCDLILLSSCTTDGTCYVTTASLDGESNCKTHYAVRDTIALCTAESIDTLRAAIECEQPQPDLYKFVGRINIYSNSLEAVARSLGPENLLLKGATLKNTEKIYGVAVYTGMETKMALNYQGKSQKRSAVEKSINAFLIVYLFILLTKAAVCTTLKYVWQSTPYNDEPWYNQKTQKERETLKVLKMFTDFLSFMVLFNFIIPVSMYVTVEMQKFLGSFFISWDKDFYDEEINEGALVNTSDLNEELGQVDYVFTDKTGTLTENSMEFIECCIDGHKYKGVTQEVDGLSQTDGTLTYFDKVDKNREELFLRALCLCHTVEIKTNDAVDGATESAELTYISSSPDEIALVKGAKRYGFTFLGNRNGYMRVENQRKEIEEYELLHTLNFDAVRRRMSVIVKTQEGDILLFCKGADSAVFPRVQNHEIELTKVHVERNAMDGYRTLCVAFKEIAPDDYERINRQLIEAKMALQDREEKMEKVFDDIETNMNLIGATAVEDKLQDQAAETIEALHAAGLKVWVLTGDKMETAKSTCYACRLFQTNTELLELTTKTIEESERKEDRLHELLIEYRKKLLHEFPKSTRSFKKAWTEHQEYGLIIDGSTLSLILNSSQDSSSNNYKSIFLQICMKCTAVLCCRMAPLQKAQIVRMVKNLKGSPITLSIGDGANDVSMILESHVGIGIKGKEGRQAARNSDYSVPKFKHLKKLLLAHGHLYYVRIAHLVQYFFYKNLCFILPQFLYQFFCGFSQQPLYDAAYLTMYNICFTSLPILAYSLLEQHINIDTLTSDPRLYMKISGNAMLQLGPFLYWTFLAAFEGTVFFFGTYFLFQTASLEENGKVYGNWTFGTIVFTVLVFTVTLKLALDTRFWTWINHFVIWGSLAFYVFFSFFWGGIIWPFLKQQRMYFVFAQMLSSVSTWLAIILLIFISLFPEILLIVLKNVRRRSARRNLSCRRASDSLSARPSVRPLLLRTFSDESNVL.

The Cytoplasmic segment spans residues 1–66 (MQMVPSLPPA…NFLPKNLFEQ (66 aa)). Residues 67 to 85 (FRRIANFYFLIIFLVQVTV) form a helical membrane-spanning segment. A topological domain (extracellular) is located at residue Asp-86. The chain crosses the membrane as a helical span at residues 87-107 (TPTSPVTSGLPLFFVITVTAI). The Cytoplasmic portion of the chain corresponds to 108-290 (KQGYEDCLRH…SQKRSAVEKS (183 aa)). A helical membrane pass occupies residues 291-311 (INAFLIVYLFILLTKAAVCTT). The Extracellular portion of the chain corresponds to 312 to 346 (LKYVWQSTPYNDEPWYNQKTQKERETLKVLKMFTD). The helical transmembrane segment at 347 to 367 (FLSFMVLFNFIIPVSMYVTVE) threads the bilayer. Topologically, residues 368–879 (MQKFLGSFFI…YVRIAHLVQY (512 aa)) are cytoplasmic. Asp-412 functions as the 4-aspartylphosphate intermediate in the catalytic mechanism. Asp-412, Lys-413, and Thr-414 together coordinate ATP. Asp-412 is a binding site for Mg(2+). Residue Thr-414 participates in Mg(2+) binding. At Ser-445 the chain carries Phosphoserine. ATP-binding residues include Glu-501, Phe-543, Lys-566, Arg-597, Thr-677, Gly-678, Asp-679, Arg-792, and Lys-798. Asp-819 provides a ligand contact to Mg(2+). ATP-binding residues include Asn-822 and Asp-823. Asp-823 contributes to the Mg(2+) binding site. A helical membrane pass occupies residues 880 to 900 (FFYKNLCFILPQFLYQFFCGF). Over 901–908 (SQQPLYDA) the chain is Extracellular. A helical transmembrane segment spans residues 909-929 (AYLTMYNICFTSLPILAYSLL). Residues 930-955 (EQHINIDTLTSDPRLYMKISGNAMLQ) lie on the Cytoplasmic side of the membrane. Residues 956–976 (LGPFLYWTFLAAFEGTVFFFG) traverse the membrane as a helical segment. Topologically, residues 977–995 (TYFLFQTASLEENGKVYGN) are extracellular. The helical transmembrane segment at 996 to 1016 (WTFGTIVFTVLVFTVTLKLAL) threads the bilayer. Residues 1017 to 1026 (DTRFWTWINH) lie on the Cytoplasmic side of the membrane. A helical transmembrane segment spans residues 1027 to 1047 (FVIWGSLAFYVFFSFFWGGII). Topologically, residues 1048–1069 (WPFLKQQRMYFVFAQMLSSVST) are extracellular. Residues 1070 to 1090 (WLAIILLIFISLFPEILLIVL) form a helical membrane-spanning segment. The Cytoplasmic segment spans residues 1091-1132 (KNVRRRSARRNLSCRRASDSLSARPSVRPLLLRTFSDESNVL). 3 positions are modified to phosphoserine: Ser-1108, Ser-1116, and Ser-1126. A Di-leucine motif motif is present at residues 1116-1121 (SVRPLL).

This sequence belongs to the cation transport ATPase (P-type) (TC 3.A.3) family. Type IV subfamily. Component of a P4-ATPase flippase complex which consists of a catalytic alpha subunit ATP11C and an accessory beta subunit TMEM30A. Requires Mg(2+) as cofactor. Proteolytically cleaved by CASP3, CASP6 and CASP7. Post-translationally, phosphorylated at Ser-1116 likely by PRKCA; this creates a functional di-leucine motif that is sufficient for endocytosis. In terms of tissue distribution, widely expressed.

It localises to the cell membrane. The protein resides in the endoplasmic reticulum membrane. It is found in the early endosome membrane. The protein localises to the recycling endosome membrane. The enzyme catalyses ATP + H2O + phospholipidSide 1 = ADP + phosphate + phospholipidSide 2.. It catalyses the reaction a 1,2-diacyl-sn-glycero-3-phospho-L-serine(out) + ATP + H2O = a 1,2-diacyl-sn-glycero-3-phospho-L-serine(in) + ADP + phosphate + H(+). The catalysed reaction is a 1,2-diacyl-sn-glycero-3-phosphoethanolamine(out) + ATP + H2O = a 1,2-diacyl-sn-glycero-3-phosphoethanolamine(in) + ADP + phosphate + H(+). With respect to regulation, the flippase activity is inactivated by caspase-mediated cleavage in apoptotic cells, allowing for PS exposure on the cell surface and engulfment of apoptotic cells by macrophages. The ATPase activity is up-regulated by aminophospholipids PS and PE and down-regulated by Increasing intracellular Ca2+ levels. In terms of biological role, catalytic component of a P4-ATPase flippase complex which catalyzes the hydrolysis of ATP coupled to the transport of aminophospholipids, phosphatidylserines (PS) and phosphatidylethanolamines (PE), from the outer to the inner leaflet of the plasma membrane. Major PS-flippase in immune cell subsets. In erythrocyte plasma membrane, it is required to maintain PS in the inner leaflet preventing its exposure on the surface. This asymmetric distribution is critical for the survival of erythrocytes in circulation since externalized PS is a phagocytic signal for erythrocyte clearance by splenic macrophages. Required for B cell differentiation past the pro-B cell stage. Seems to mediate PS flipping in pro-B cells. May be involved in the transport of cholestatic bile acids. The polypeptide is Phospholipid-transporting ATPase IG (Homo sapiens (Human)).